The sequence spans 166 residues: Large ribosomal subunit protein uL10 (166 aa).

This sequence belongs to the universal ribosomal protein uL10 family. As to quaternary structure, part of the ribosomal stalk of the 50S ribosomal subunit. The N-terminus interacts with L11 and the large rRNA to form the base of the stalk. The C-terminus forms an elongated spine to which L12 dimers bind in a sequential fashion forming a multimeric L10(L12)X complex.

In terms of biological role, forms part of the ribosomal stalk, playing a central role in the interaction of the ribosome with GTP-bound translation factors. This is Large ribosomal subunit protein uL10 from Bacillus cereus (strain 03BB102).